Reading from the N-terminus, the 135-residue chain is Large ribosomal subunit protein uL16c (135 aa).

The disordered stretch occupies residues 1-20 (MLSPKRTRFRKQHRGRMKGK).

The protein belongs to the universal ribosomal protein uL16 family. Part of the 50S ribosomal subunit.

The protein localises to the plastid. The protein resides in the chloroplast. This chain is Large ribosomal subunit protein uL16c, found in Landoltia punctata (Dotted duckmeat).